A 233-amino-acid chain; its full sequence is ATP-dependent Clp protease proteolytic subunit 1 (233 aa).

S116 acts as the Nucleophile in catalysis. The active site involves H141.

This sequence belongs to the peptidase S14 family. In terms of assembly, fourteen ClpP subunits assemble into 2 heptameric rings which stack back to back to give a disk-like structure with a central cavity, resembling the structure of eukaryotic proteasomes.

Its subcellular location is the cytoplasm. The enzyme catalyses Hydrolysis of proteins to small peptides in the presence of ATP and magnesium. alpha-casein is the usual test substrate. In the absence of ATP, only oligopeptides shorter than five residues are hydrolyzed (such as succinyl-Leu-Tyr-|-NHMec, and Leu-Tyr-Leu-|-Tyr-Trp, in which cleavage of the -Tyr-|-Leu- and -Tyr-|-Trp bonds also occurs).. In terms of biological role, cleaves peptides in various proteins in a process that requires ATP hydrolysis. Has a chymotrypsin-like activity. Plays a major role in the degradation of misfolded proteins. This Salinibacter ruber (strain DSM 13855 / M31) protein is ATP-dependent Clp protease proteolytic subunit 1.